We begin with the raw amino-acid sequence, 1372 residues long: MAYSYTEKKRIRKSFAELPHVMDIPYLLAIQVDSYEQFLQENKKPKARENTGLQAAFSSIFPIESNSNNAELQFVEYYLGAPEFDERECISRGSTFAAPLRVKIRLVIKDKDSKDKNSKAAIKDIREQNVYMGEIPLMTDNGTFIINGTERVIVSQLHRSPGVFFDHDKGKSHSSGKVLYNARIIPYRGSWLDFEFDAKDLVFARIDRRRKLLGTIILRALGMDTNEILDTFFEKVSVYKGEEQFEIDLVADRLRGEMAQFDIVSPDGEVLVEQGKRINARRIRQIEQSGMKKLAVPDEYLYERILAEDIVVNDEVIAKANTLIDHELLVKLSAFEASESIKEFKILFTNDIDHGTYIADTLRADSTGSREEALIEIYKVMRPGEPPTIDTAEKLFESMFFNADRYDLSNVGRMKFNRRLGRTFENTDDPDIKREQSVLTKDDIIDVLKELINIRNGIGEVDDIDHLGNRRIRSVGEMAENQFRVGLVRVERAVKERLSSAESDNLSPQDLINSKPVAAAVKEFFGSSQLSQFMDQNNPLSEITHKRRISALGPGGLTRERAGFEVRDVHNTHYGRVCPIETPEGPNIGLINSLATFAKTNEFGFLETPYRKVVDGKVTDDIEYLSAIEEVGTVIAQADSELDENGVLAEEMVMVRSGGESVRMPSDKVTHMDVSPSQVVSVAASLIPFLEHDDANRALMGSNMQRQAVPTLRADKPLVGTGMERHVARDSGVCVIARRGGVIEDVDASRIVVRVNEDEMQAGEAGIDIYNLIKYTRSNQNTCINQRIIVNQGDEIAGGDILADGPSTDLGELALGQNMRVAFMPWNGYNFEDSILLSERVVKEDRFTTIHIQELTCVARDTKLGTEEITADIPNVGEAALSALDESGIVYIGAEVDAGDILVGKVTPKGETQLTPEEKLLRAIFGEKAADVKDTSLRVPTSTKGTVIDVQVFTRDGVEKDARAKSIEKSQLDNYRKDLKEELRIFEEAARSRISHLLDGQAISGGAGLKSGTVLAESELLEMSLETLLDIQPVEEEIAERLTQIQEFLVDKQKDIDTKFAEKKRKLTAGDDLAHGVQKIVKVYLAVKRRIQPGDKMAGRHGNKGVVSRIMPVEDMPYDENGNPVDIVLNPLGVPSRMNIGQVLETHLGMAAKGLGDKINGMIKAQAAVTELREFLDKIYNKVGGEQVDLDSLSDDDIRALAQNLRDGVPMGTAVFDGAREVQIDELLELAGYPSSGQQTLYDGRTGQKFDRPVTVGYMYMLKLNHLVDDKMHARSTGSYSLVTQQPLGGKAQFGGQRFGEMEVWALEAYGATYTLQEMLTVKSDDVEGRTRMYKNIVDGEQYMDPGMPESFNVLTKEIKSLGINIELKESN.

This sequence belongs to the RNA polymerase beta chain family. In terms of assembly, the RNAP catalytic core consists of 2 alpha, 1 beta, 1 beta' and 1 omega subunit. When a sigma factor is associated with the core the holoenzyme is formed, which can initiate transcription.

The enzyme catalyses RNA(n) + a ribonucleoside 5'-triphosphate = RNA(n+1) + diphosphate. Functionally, DNA-dependent RNA polymerase catalyzes the transcription of DNA into RNA using the four ribonucleoside triphosphates as substrates. This chain is DNA-directed RNA polymerase subunit beta, found in Psychrobacter sp. (strain PRwf-1).